The primary structure comprises 289 residues: Probable branched-chain-amino-acid aminotransferase (289 aa).

An N6-(pyridoxal phosphate)lysine modification is found at Lys-154.

Belongs to the class-IV pyridoxal-phosphate-dependent aminotransferase family. Pyridoxal 5'-phosphate is required as a cofactor.

The enzyme catalyses L-leucine + 2-oxoglutarate = 4-methyl-2-oxopentanoate + L-glutamate. It carries out the reaction L-isoleucine + 2-oxoglutarate = (S)-3-methyl-2-oxopentanoate + L-glutamate. It catalyses the reaction L-valine + 2-oxoglutarate = 3-methyl-2-oxobutanoate + L-glutamate. Its pathway is amino-acid biosynthesis; L-isoleucine biosynthesis; L-isoleucine from 2-oxobutanoate: step 4/4. It functions in the pathway amino-acid biosynthesis; L-leucine biosynthesis; L-leucine from 3-methyl-2-oxobutanoate: step 4/4. It participates in amino-acid biosynthesis; L-valine biosynthesis; L-valine from pyruvate: step 4/4. In terms of biological role, acts on leucine, isoleucine and valine. This chain is Probable branched-chain-amino-acid aminotransferase (ilvE), found in Rickettsia bellii (strain RML369-C).